The following is a 400-amino-acid chain: MTMRSKFSIDRVLHDTAFAKWCQKEESRNADSITLYTSILDFESKLKTGSPSLSLLKLARHIHRKYVSLNTGTCHVIGDSIRTKISTRVHEVLDGKPPYIDLFDPLKQPLFQHLRSMHTEFSTTTADVNTTWEDASSTSSSNKGATIWFNEDAIDKSSRHEIGQSTVTHESEDDRFSFFNAVCTRLNSLQETKNSSETEEHAESPRKEKSSTPYGTDGFAPPPRSTQTNTLKVSNLPKRFESLYKKKRQQVATSDSSGFGSNASDFWSFERYGKSNQGTLERPNRLFTGTNNGFSTLQPKRRGSEAPKMTVELRYENDVPMVAKISANHAQSVTLRYFRHLFGLHYTDNCRFFFKSTCEDGSAQYQWTLLFHDDDILPVFQNRITAICRMCPPPEDHDLI.

The 129-residue stretch at 4–132 (RSKFSIDRVL…TTTADVNTTW (129 aa)) folds into the RGS domain. Disordered regions lie at residues 190–233 (QETK…TLKV) and 278–306 (GTLE…GSEA). The segment covering 194 to 210 (NSSETEEHAESPRKEKS) has biased composition (basic and acidic residues). Polar residues predominate over residues 287–298 (FTGTNNGFSTLQ). Residues 305 to 392 (EAPKMTVELR…RITAICRMCP (88 aa)) enclose the DIX domain.

As to quaternary structure, interacts with bar-1, dsh-2, gsk-3, and mig-5.

Functionally, works in parallel with pry-1 in negatively regulating bar-1 signaling in vulval precursor cells and Q neuroblasts. Shown to have a role in excretory cell development. The protein is Axin-like protein 1 of Caenorhabditis elegans.